Here is an 83-residue protein sequence, read N- to C-terminus: MKTSMFLTLTGLVLLFVVCYASESEEKEFPKELLSSIFAADSDFKVEERGCLGDKCDYNNGCCSGYVCSRTWKWCVLAGPWRR.

A signal peptide spans 1-21 (MKTSMFLTLTGLVLLFVVCYA). The propeptide occupies 22-49 (SESEEKEFPKELLSSIFAADSDFKVEER). 3 cysteine pairs are disulfide-bonded: cysteine 51-cysteine 63, cysteine 56-cysteine 68, and cysteine 62-cysteine 75.

The protein belongs to the neurotoxin 10 (Hwtx-1) family. 51 (Hntx-8) subfamily. Hntx-8 sub-subfamily. As to expression, expressed by the venom gland.

The protein resides in the secreted. Its function is as follows. Agglutinates erythrocytes. The polypeptide is U5-theraphotoxin-Hs1a 6 (Cyriopagopus schmidti (Chinese bird spider)).